Reading from the N-terminus, the 851-residue chain is DNA mismatch repair protein MutS (851 aa).

614–621 is a binding site for ATP; sequence GPNMGGKS.

Belongs to the DNA mismatch repair MutS family.

Its function is as follows. This protein is involved in the repair of mismatches in DNA. It is possible that it carries out the mismatch recognition step. This protein has a weak ATPase activity. In Yersinia pseudotuberculosis serotype O:1b (strain IP 31758), this protein is DNA mismatch repair protein MutS.